A 162-amino-acid polypeptide reads, in one-letter code: Shikimate kinase (162 aa).

Residue Gly-11–Ser-16 participates in ATP binding. Ser-15 serves as a coordination point for Mg(2+). Substrate contacts are provided by Asp-33, Arg-57, and Gly-80. ATP is bound at residue Arg-116. Residue Arg-132 participates in substrate binding.

It belongs to the shikimate kinase family. As to quaternary structure, monomer. Requires Mg(2+) as cofactor.

The protein localises to the cytoplasm. It carries out the reaction shikimate + ATP = 3-phosphoshikimate + ADP + H(+). It functions in the pathway metabolic intermediate biosynthesis; chorismate biosynthesis; chorismate from D-erythrose 4-phosphate and phosphoenolpyruvate: step 5/7. Catalyzes the specific phosphorylation of the 3-hydroxyl group of shikimic acid using ATP as a cosubstrate. This chain is Shikimate kinase, found in Helicobacter pylori (strain P12).